We begin with the raw amino-acid sequence, 156 residues long: Snaclec stejaggregin-B subunit alpha (156 aa).

The N-terminal stretch at 1 to 23 is a signal peptide; that stretch reads MGRFISVSFGLLVVFLSLSGTGA. 3 cysteine pairs are disulfide-bonded: Cys-25–Cys-36, Cys-53–Cys-150, and Cys-125–Cys-142. The region spanning 32–151 is the C-type lectin domain; the sequence is FKQYCYQIIK…CEQKHLFMCK (120 aa).

The protein belongs to the snaclec family. Heteromultimer; disulfide-linked. Expressed by the venom gland.

The protein resides in the secreted. Functionally, interferes with one step of hemostasis (modulation of platelet aggregation, or coagulation cascade, for example). This chain is Snaclec stejaggregin-B subunit alpha, found in Trimeresurus stejnegeri (Chinese green tree viper).